A 953-amino-acid polypeptide reads, in one-letter code: Isoleucine--tRNA ligase (953 aa).

A 'HIGH' region motif is present at residues 57–67 (PYANGDIHIGH). Residue Glu-582 participates in L-isoleucyl-5'-AMP binding. Residues 623–627 (KMSKS) carry the 'KMSKS' region motif. ATP is bound at residue Lys-626. Zn(2+)-binding residues include Cys-916, Cys-919, Cys-936, and Cys-939.

Belongs to the class-I aminoacyl-tRNA synthetase family. IleS type 1 subfamily. As to quaternary structure, monomer. It depends on Zn(2+) as a cofactor.

The protein localises to the cytoplasm. It carries out the reaction tRNA(Ile) + L-isoleucine + ATP = L-isoleucyl-tRNA(Ile) + AMP + diphosphate. In terms of biological role, catalyzes the attachment of isoleucine to tRNA(Ile). As IleRS can inadvertently accommodate and process structurally similar amino acids such as valine, to avoid such errors it has two additional distinct tRNA(Ile)-dependent editing activities. One activity is designated as 'pretransfer' editing and involves the hydrolysis of activated Val-AMP. The other activity is designated 'posttransfer' editing and involves deacylation of mischarged Val-tRNA(Ile). The chain is Isoleucine--tRNA ligase from Bordetella pertussis (strain Tohama I / ATCC BAA-589 / NCTC 13251).